Reading from the N-terminus, the 623-residue chain is Arginine decarboxylase 2 (623 aa).

Lys109 bears the N6-(pyridoxal phosphate)lysine mark. 295-305 contacts substrate; sequence LDCGGGLGVDY.

This sequence belongs to the Orn/Lys/Arg decarboxylase class-II family. SpeA subfamily. Pyridoxal 5'-phosphate serves as cofactor. Mg(2+) is required as a cofactor. Expressed in stems (at protein level).

It carries out the reaction L-arginine + H(+) = agmatine + CO2. The protein operates within amine and polyamine biosynthesis; agmatine biosynthesis; agmatine from L-arginine: step 1/1. The sequence is that of Arginine decarboxylase 2 (ADC2) from Oryza sativa subsp. japonica (Rice).